A 312-amino-acid polypeptide reads, in one-letter code: Glyoxylate/hydroxypyruvate reductase A (312 aa).

Arg227 is an active-site residue. His275 functions as the Proton donor in the catalytic mechanism.

It belongs to the D-isomer specific 2-hydroxyacid dehydrogenase family. GhrA subfamily.

Its subcellular location is the cytoplasm. The catalysed reaction is glycolate + NADP(+) = glyoxylate + NADPH + H(+). The enzyme catalyses (R)-glycerate + NAD(+) = 3-hydroxypyruvate + NADH + H(+). It carries out the reaction (R)-glycerate + NADP(+) = 3-hydroxypyruvate + NADPH + H(+). Its function is as follows. Catalyzes the NADPH-dependent reduction of glyoxylate and hydroxypyruvate into glycolate and glycerate, respectively. The polypeptide is Glyoxylate/hydroxypyruvate reductase A (Salmonella dublin (strain CT_02021853)).